Here is a 332-residue protein sequence, read N- to C-terminus: Ketol-acid reductoisomerase (NADP(+)) 2 (332 aa).

A KARI N-terminal Rossmann domain is found at 2-182; the sequence is AELFYDADAD…GGTRAGVIRT (181 aa). Residues 25–28, S51, S53, and 83–86 contribute to the NADP(+) site; these read YGSQ and DPIQ. H108 is a catalytic residue. G134 contacts NADP(+). In terms of domain architecture, KARI C-terminal knotted spans 183-328; it reads TFTEETETDL…KELRKLMSWV (146 aa). Positions 191, 195, 227, and 231 each coordinate Mg(2+). S252 provides a ligand contact to substrate.

Belongs to the ketol-acid reductoisomerase family. Mg(2+) serves as cofactor.

It catalyses the reaction (2R)-2,3-dihydroxy-3-methylbutanoate + NADP(+) = (2S)-2-acetolactate + NADPH + H(+). The enzyme catalyses (2R,3R)-2,3-dihydroxy-3-methylpentanoate + NADP(+) = (S)-2-ethyl-2-hydroxy-3-oxobutanoate + NADPH + H(+). It participates in amino-acid biosynthesis; L-isoleucine biosynthesis; L-isoleucine from 2-oxobutanoate: step 2/4. It functions in the pathway amino-acid biosynthesis; L-valine biosynthesis; L-valine from pyruvate: step 2/4. In terms of biological role, involved in the biosynthesis of branched-chain amino acids (BCAA). Catalyzes an alkyl-migration followed by a ketol-acid reduction of (S)-2-acetolactate (S2AL) to yield (R)-2,3-dihydroxy-isovalerate. In the isomerase reaction, S2AL is rearranged via a Mg-dependent methyl migration to produce 3-hydroxy-3-methyl-2-ketobutyrate (HMKB). In the reductase reaction, this 2-ketoacid undergoes a metal-dependent reduction by NADPH to yield (R)-2,3-dihydroxy-isovalerate. This is Ketol-acid reductoisomerase (NADP(+)) 2 from Streptomyces coelicolor (strain ATCC BAA-471 / A3(2) / M145).